Reading from the N-terminus, the 498-residue chain is Glycerol kinase (498 aa).

T12 contributes to the ADP binding site. Positions 12, 13, and 14 each coordinate ATP. Position 12 (T12) interacts with sn-glycerol 3-phosphate. R16 serves as a coordination point for ADP. The sn-glycerol 3-phosphate site is built by R82, E83, Y134, and D243. Positions 82, 83, 134, 243, and 244 each coordinate glycerol. Residues T265 and G308 each contribute to the ADP site. Residues T265, G308, Q312, and G409 each coordinate ATP. Positions 409 and 413 each coordinate ADP.

It belongs to the FGGY kinase family. Homotetramer and homodimer (in equilibrium).

The enzyme catalyses glycerol + ATP = sn-glycerol 3-phosphate + ADP + H(+). It functions in the pathway polyol metabolism; glycerol degradation via glycerol kinase pathway; sn-glycerol 3-phosphate from glycerol: step 1/1. With respect to regulation, activated by phosphorylation and inhibited by fructose 1,6-bisphosphate (FBP). Its function is as follows. Key enzyme in the regulation of glycerol uptake and metabolism. Catalyzes the phosphorylation of glycerol to yield sn-glycerol 3-phosphate. This Clostridium botulinum (strain 657 / Type Ba4) protein is Glycerol kinase.